A 376-amino-acid chain; its full sequence is 5-amino-6-(D-ribitylamino)uracil--L-tyrosine 4-hydroxyphenyl transferase 1 (376 aa).

A Radical SAM core domain is found at 50–284 (VTYVVNRNIN…AISRILLHGH (235 aa)). 3 residues coordinate [4Fe-4S] cluster: Cys-64, Cys-68, and Cys-71.

This sequence belongs to the radical SAM superfamily. CofH family. As to quaternary structure, consists of two subunits, CofG and CofH. [4Fe-4S] cluster serves as cofactor.

The catalysed reaction is 5-amino-6-(D-ribitylamino)uracil + L-tyrosine + S-adenosyl-L-methionine = 5-amino-5-(4-hydroxybenzyl)-6-(D-ribitylimino)-5,6-dihydrouracil + 2-iminoacetate + 5'-deoxyadenosine + L-methionine + H(+). It participates in cofactor biosynthesis; coenzyme F0 biosynthesis. In terms of biological role, catalyzes the radical-mediated synthesis of 5-amino-5-(4-hydroxybenzyl)-6-(D-ribitylimino)-5,6-dihydrouracil from 5-amino-6-(D-ribitylamino)uracil and L-tyrosine. This Methanosarcina barkeri (strain Fusaro / DSM 804) protein is 5-amino-6-(D-ribitylamino)uracil--L-tyrosine 4-hydroxyphenyl transferase 1.